The chain runs to 174 residues: Methylated-DNA--protein-cysteine methyltransferase (174 aa).

Cysteine 141 (nucleophile; methyl group acceptor) is an active-site residue.

This sequence belongs to the MGMT family.

It localises to the cytoplasm. The enzyme catalyses a 6-O-methyl-2'-deoxyguanosine in DNA + L-cysteinyl-[protein] = S-methyl-L-cysteinyl-[protein] + a 2'-deoxyguanosine in DNA. It catalyses the reaction a 4-O-methyl-thymidine in DNA + L-cysteinyl-[protein] = a thymidine in DNA + S-methyl-L-cysteinyl-[protein]. Involved in the cellular defense against the biological effects of O6-methylguanine (O6-MeG) and O4-methylthymine (O4-MeT) in DNA. Repairs the methylated nucleobase in DNA by stoichiometrically transferring the methyl group to a cysteine residue in the enzyme. This is a suicide reaction: the enzyme is irreversibly inactivated. This chain is Methylated-DNA--protein-cysteine methyltransferase, found in Thermococcus gammatolerans (strain DSM 15229 / JCM 11827 / EJ3).